The following is a 309-amino-acid chain: tRNA uridine(34) hydroxylase (309 aa).

In terms of domain architecture, Rhodanese spans 137–232 (RGDEVVFFDG…YGEKYGDKGL (96 aa)). Catalysis depends on Cys-192, which acts as the Cysteine persulfide intermediate.

This sequence belongs to the TrhO family.

It catalyses the reaction uridine(34) in tRNA + AH2 + O2 = 5-hydroxyuridine(34) in tRNA + A + H2O. Its function is as follows. Catalyzes oxygen-dependent 5-hydroxyuridine (ho5U) modification at position 34 in tRNAs. In Corynebacterium jeikeium (strain K411), this protein is tRNA uridine(34) hydroxylase.